We begin with the raw amino-acid sequence, 69 residues long: Large ribosomal subunit protein bL31 (69 aa).

Zn(2+) contacts are provided by C17, C19, C37, and C40.

The protein belongs to the bacterial ribosomal protein bL31 family. Type A subfamily. As to quaternary structure, part of the 50S ribosomal subunit. It depends on Zn(2+) as a cofactor.

Binds the 23S rRNA. The chain is Large ribosomal subunit protein bL31 from Thermoanaerobacter pseudethanolicus (strain ATCC 33223 / 39E) (Clostridium thermohydrosulfuricum).